The sequence spans 338 residues: Erlin-2 (338 aa).

The Cytoplasmic portion of the chain corresponds to 1–3 (MAQ). Residues 4–24 (LGAVVAVAASFFCASLFSAVH) traverse the membrane as a helical segment. Over 25–338 (KIEEGHIGVY…DEPMEADSEN (314 aa)) the chain is Lumenal. Residue asparagine 106 is glycosylated (N-linked (GlcNAc...) asparagine). The interaction with ERLIN1 stretch occupies residues 177-309 (EAIRRNYELM…DIPNMFMDSA (133 aa)). Residue lysine 267 is modified to N6-acetyllysine.

It belongs to the band 7/mec-2 family. In terms of assembly, forms a heteromeric complex with ERLIN1. In complex with ERLIN1, interacts with RNF170. Interacts with activated ITPR1, independently of the degree of ITPR1 polyubiquitination. Interacts with SCAP, INSIG1, SREBF1 and SREBF2 under cholesterol sufficiency conditions; indicative for an association with the SCAP-SREBP-INSIG complex. Probably part of an AMFR/gp78 and INSIG1-containing ubiquitin ligase complex involved in ERAD of HMGCR. Interacts with TMUB1; TMUB1 bridges the association with AMFR. Interacts with SYVN1 and RNF139. Interacts with TMEM259. Interacts with TMEM41B. Post-translationally, deubiquitinated by USP25; leading to stabilization.

The protein localises to the endoplasmic reticulum membrane. In terms of biological role, component of the ERLIN1/ERLIN2 complex which mediates the endoplasmic reticulum-associated degradation (ERAD) of inositol 1,4,5-trisphosphate receptors (IP3Rs) such as ITPR1. Promotes sterol-accelerated ERAD of HMGCR probably implicating an AMFR/gp78-containing ubiquitin ligase complex. Involved in regulation of cellular cholesterol homeostasis by regulation the SREBP signaling pathway. May promote ER retention of the SCAP-SREBF complex. This is Erlin-2 (ERLIN2) from Bos taurus (Bovine).